The sequence spans 197 residues: Glycerol-3-phosphate acyltransferase (197 aa).

5 consecutive transmembrane segments (helical) span residues 5–25 (IYIAALLLGYLFGSIPFGLIL), 54–74 (GLAAATLLLDALKGTAAVIIA), 80–100 (AEAAMLAALGAFLGHLFPVWL), 112–132 (IGVLIGLFWPGAIVFCLLWLA), and 153–173 (IFLWWFGHPALASLFAVLTLL).

Belongs to the PlsY family. As to quaternary structure, probably interacts with PlsX.

It is found in the cell inner membrane. The enzyme catalyses an acyl phosphate + sn-glycerol 3-phosphate = a 1-acyl-sn-glycero-3-phosphate + phosphate. Its pathway is lipid metabolism; phospholipid metabolism. In terms of biological role, catalyzes the transfer of an acyl group from acyl-phosphate (acyl-PO(4)) to glycerol-3-phosphate (G3P) to form lysophosphatidic acid (LPA). This enzyme utilizes acyl-phosphate as fatty acyl donor, but not acyl-CoA or acyl-ACP. This is Glycerol-3-phosphate acyltransferase from Rhodopseudomonas palustris (strain HaA2).